A 140-amino-acid chain; its full sequence is ATP synthase epsilon chain (140 aa).

Belongs to the ATPase epsilon chain family. As to quaternary structure, F-type ATPases have 2 components, CF(1) - the catalytic core - and CF(0) - the membrane proton channel. CF(1) has five subunits: alpha(3), beta(3), gamma(1), delta(1), epsilon(1). CF(0) has three main subunits: a, b and c.

Its subcellular location is the cell inner membrane. Produces ATP from ADP in the presence of a proton gradient across the membrane. The protein is ATP synthase epsilon chain of Neisseria gonorrhoeae (strain ATCC 700825 / FA 1090).